The chain runs to 195 residues: Large ribosomal subunit protein uL18 (195 aa).

It belongs to the universal ribosomal protein uL18 family. In terms of assembly, part of the 50S ribosomal subunit. Contacts the 5S and 23S rRNAs.

This is one of the proteins that bind and probably mediate the attachment of the 5S RNA into the large ribosomal subunit, where it forms part of the central protuberance. This is Large ribosomal subunit protein uL18 from Methanococcus vannielii.